We begin with the raw amino-acid sequence, 63 residues long: Large ribosomal subunit protein uL30 (63 aa).

This sequence belongs to the universal ribosomal protein uL30 family. In terms of assembly, part of the 50S ribosomal subunit.

The sequence is that of Large ribosomal subunit protein uL30 from Natranaerobius thermophilus (strain ATCC BAA-1301 / DSM 18059 / JW/NM-WN-LF).